The chain runs to 400 residues: Centrosomal protein CEP57L1 (400 aa).

Residue serine 45 is modified to Phosphoserine. Coiled-coil stretches lie at residues 47–111 (NNQA…KKDI) and 138–213 (NVER…QDRA). Disordered stretches follow at residues 222-261 (REPP…EPVS) and 314-400 (MESK…KWEQ). The segment covering 244 to 258 (RTTSQARANPQSSGE) has biased composition (polar residues). Residues 261–345 (SICDSLSELL…EKIENSRINE (85 aa)) adopt a coiled-coil conformation. Basic and acidic residues-rich tracts occupy residues 314 to 342 (MESK…ENSR) and 391 to 400 (LRRDDIKWEQ).

The protein belongs to the translokin family.

It is found in the cytoplasm. Its subcellular location is the cytoskeleton. It localises to the microtubule organizing center. The protein localises to the centrosome. In terms of biological role, centrosomal protein which may be required for microtubule attachment to centrosomes. This chain is Centrosomal protein CEP57L1 (Cep57l1), found in Mus musculus (Mouse).